Reading from the N-terminus, the 339-residue chain is Fructose-1,6-bisphosphatase, cytosolic (339 aa).

Mg(2+) contacts are provided by E70, E99, D120, L122, and D123. Residues 123 to 126 (DGSS), N214, Y246, Y266, and K276 each bind substrate. E282 provides a ligand contact to Mg(2+).

The protein belongs to the FBPase class 1 family. The cofactor is Mg(2+).

The protein localises to the cytoplasm. The enzyme catalyses beta-D-fructose 1,6-bisphosphate + H2O = beta-D-fructose 6-phosphate + phosphate. This Brassica napus (Rape) protein is Fructose-1,6-bisphosphatase, cytosolic.